The following is a 512-amino-acid chain: Activin receptor type-2B (512 aa).

Residues 1-24 form the signal peptide; that stretch reads MSASWLTLAVLCATLGAGPGHGEA. Over 25-137 the chain is Extracellular; sequence ETRECIYYNA…PPPPTPSLLN (113 aa). Intrachain disulfides connect Cys29–Cys59, Cys49–Cys77, Cys84–Cys103, Cys90–Cys102, and Cys104–Cys109. Residues Asn42 and Asn65 are each glycosylated (N-linked (GlcNAc...) asparagine). Residues 138 to 158 form a helical membrane-spanning segment; the sequence is ILVYSLLPIAVLSVAILLAFW. Residues 159–512 lie on the Cytoplasmic side of the membrane; it reads MYRHRKPPYG…VDLPPKESSI (354 aa). The Protein kinase domain occupies 190-478; it reads LQLLEIKARG…LSAGCVEERI (289 aa). ATP-binding positions include 196–204 and Lys217; that span reads KARGRFGCV. Catalysis depends on Asp321, which acts as the Proton acceptor.

It belongs to the protein kinase superfamily. TKL Ser/Thr protein kinase family. TGFB receptor subfamily. Mg(2+) serves as cofactor. Requires Mn(2+) as cofactor. As to expression, not expressed in hen anterior pituitary during the ovulatory cycle but expressed in the ovarian follicle.

The protein localises to the membrane. The enzyme catalyses L-threonyl-[receptor-protein] + ATP = O-phospho-L-threonyl-[receptor-protein] + ADP + H(+). The catalysed reaction is L-seryl-[receptor-protein] + ATP = O-phospho-L-seryl-[receptor-protein] + ADP + H(+). On ligand binding, forms a receptor complex consisting of two type II and two type I transmembrane serine/threonine kinases. Type II receptors phosphorylate and activate type I receptors which autophosphorylate, then bind and activate SMAD transcriptional regulators. Receptor for activin A, activin B and inhibin A. May modulate neuropeptide expression in dorsal root ganglia (DRG) neurons and ovarian follicle development. In Gallus gallus (Chicken), this protein is Activin receptor type-2B (ACVR2B).